The sequence spans 208 residues: Uracil phosphoribosyltransferase (208 aa).

Residues arginine 78, arginine 103, and 130–138 (DPMLATGGS) each bind 5-phospho-alpha-D-ribose 1-diphosphate. Residues isoleucine 193 and 198–200 (GDA) contribute to the uracil site. 5-phospho-alpha-D-ribose 1-diphosphate is bound at residue aspartate 199.

The protein belongs to the UPRTase family. Mg(2+) is required as a cofactor.

The catalysed reaction is UMP + diphosphate = 5-phospho-alpha-D-ribose 1-diphosphate + uracil. It functions in the pathway pyrimidine metabolism; UMP biosynthesis via salvage pathway; UMP from uracil: step 1/1. Allosterically activated by GTP. Catalyzes the conversion of uracil and 5-phospho-alpha-D-ribose 1-diphosphate (PRPP) to UMP and diphosphate. In Photobacterium profundum (strain SS9), this protein is Uracil phosphoribosyltransferase.